The primary structure comprises 482 residues: Chitobiosyldiphosphodolichol beta-mannosyltransferase (482 aa).

The Lumenal portion of the chain corresponds to 1-2 (MA). A helical membrane pass occupies residues 3–23 (ASCVALLVLALLLLVLLLGLW). Residues 24-99 (KRGRQTGRAR…DLRGLGAGPR (76 aa)) lie on the Cytoplasmic side of the membrane. Residues 100–120 (ILQYGVKVVFQAVYLLWKMMR) constitute an intramembrane region (helical). Topologically, residues 121-482 (MDPAAYIFLQ…PCGHPSCRGF (362 aa)) are cytoplasmic. At Ser242 the chain carries Phosphoserine.

The protein belongs to the glycosyltransferase group 1 family. Glycosyltransferase 33 subfamily.

It is found in the endoplasmic reticulum membrane. The enzyme catalyses an N,N'-diacetylchitobiosyl-diphospho-di-trans,poly-cis-dolichol + GDP-alpha-D-mannose = a beta-D-Man-(1-&gt;4)-beta-D-GlcNAc-(1-&gt;4)-alpha-D-GlcNAc-diphospho-di-trans,poly-cis-dolichol + GDP + H(+). It participates in protein modification; protein glycosylation. In terms of biological role, mannosyltransferase that operates in the biosynthetic pathway of dolichol-linked oligosaccharides, the glycan precursors employed in protein asparagine (N)-glycosylation. The assembly of dolichol-linked oligosaccharides begins on the cytosolic side of the endoplasmic reticulum membrane and finishes in its lumen. The sequential addition of sugars to dolichol pyrophosphate produces dolichol-linked oligosaccharides containing fourteen sugars, including two GlcNAcs, nine mannoses and three glucoses. Once assembled, the oligosaccharide is transferred from the lipid to nascent proteins by oligosaccharyltransferases. Catalyzes, on the cytoplasmic face of the endoplasmic reticulum, the addition of the first mannose residues to the dolichol-linked oligosaccharide chain, to produce Man1GlcNAc(2)-PP-dolichol core oligosaccharide. Man1GlcNAc(2)-PP-dolichol is a substrate for ALG2, the following enzyme in the biosynthetic pathway. The polypeptide is Chitobiosyldiphosphodolichol beta-mannosyltransferase (Mus musculus (Mouse)).